A 166-amino-acid polypeptide reads, in one-letter code: Myosin regulatory light chain 2, ventricular/cardiac muscle isoform (166 aa).

A N,N,N-trimethylserine modification is found at S2. N14 carries the post-translational modification Deamidated asparagine. S19 is modified (phosphoserine). 3 consecutive EF-hand domains span residues T24–V59, D94–R129, and F130–K165. Ca(2+)-binding residues include D37, N39, D41, and D48. T52 bears the Phosphothreonine mark.

Myosin is a hexamer of 2 heavy chains and 4 light chains. Interacts with MYOC. In terms of processing, N-terminus is methylated by METTL11A/NTM1. Phosphorylated by MYLK3 and MYLK2; promotes cardiac muscle contraction and function. Dephosphorylated by PPP1CB complexed to PPP1R12B. The phosphorylated form in adult is expressed as gradients across the heart from endocardium (low phosphorylation) to epicardium (high phosphorylation); regulates cardiac torsion and workload distribution.

It is found in the cytoplasm. The protein localises to the myofibril. Its subcellular location is the sarcomere. The protein resides in the a band. In terms of biological role, contractile protein that plays a role in heart development and function. Following phosphorylation, plays a role in cross-bridge cycling kinetics and cardiac muscle contraction by increasing myosin lever arm stiffness and promoting myosin head diffusion; as a consequence of the increase in maximum contraction force and calcium sensitivity of contraction force. These events altogether slow down myosin kinetics and prolong duty cycle resulting in accumulated myosins being cooperatively recruited to actin binding sites to sustain thin filament activation as a means to fine-tune myofilament calcium sensitivity to force. During cardiogenesis plays an early role in cardiac contractility by promoting cardiac myofibril assembly. The sequence is that of Myosin regulatory light chain 2, ventricular/cardiac muscle isoform from Bos taurus (Bovine).